Consider the following 375-residue polypeptide: DNA replication and repair protein RecF (375 aa).

An ATP-binding site is contributed by 30 to 37 (GENAQGKT).

This sequence belongs to the RecF family.

The protein resides in the cytoplasm. The RecF protein is involved in DNA metabolism; it is required for DNA replication and normal SOS inducibility. RecF binds preferentially to single-stranded, linear DNA. It also seems to bind ATP. In Bacillus mycoides (strain KBAB4) (Bacillus weihenstephanensis), this protein is DNA replication and repair protein RecF.